Reading from the N-terminus, the 324-residue chain is Delta-aminolevulinic acid dehydratase (324 aa).

Zn(2+) contacts are provided by C120, C122, and C130. The active-site Schiff-base intermediate with substrate is the K195. 2 residues coordinate 5-aminolevulinate: R205 and R216. E232 is a Mg(2+) binding site. K247 (schiff-base intermediate with substrate) is an active-site residue. 5-aminolevulinate contacts are provided by S273 and Y312.

Belongs to the ALAD family. Homooctamer. Zn(2+) serves as cofactor.

The catalysed reaction is 2 5-aminolevulinate = porphobilinogen + 2 H2O + H(+). The protein operates within porphyrin-containing compound metabolism; protoporphyrin-IX biosynthesis; coproporphyrinogen-III from 5-aminolevulinate: step 1/4. Allosteric enzyme. Stimulated by magnesium ions. In terms of biological role, catalyzes an early step in the biosynthesis of tetrapyrroles. Binds two molecules of 5-aminolevulinate per subunit, each at a distinct site, and catalyzes their condensation to form porphobilinogen. The polypeptide is Delta-aminolevulinic acid dehydratase (hemB) (Escherichia coli (strain K12)).